Consider the following 323-residue polypeptide: DNA-directed RNA polymerase subunit alpha 1 (323 aa).

The segment at 1 to 228 is alpha N-terminal domain (alpha-NTD); it reads MSNNNSKLEF…EQISVFVSLR (228 aa). Residues 244 to 323 are alpha C-terminal domain (alpha-CTD); the sequence is IDPILLKPID…DNFRELVEGK (80 aa).

The protein belongs to the RNA polymerase alpha chain family. As to quaternary structure, homodimer. The RNAP catalytic core consists of 2 alpha, 1 beta, 1 beta' and 1 omega subunit. When a sigma factor is associated with the core the holoenzyme is formed, which can initiate transcription.

It catalyses the reaction RNA(n) + a ribonucleoside 5'-triphosphate = RNA(n+1) + diphosphate. Functionally, DNA-dependent RNA polymerase catalyzes the transcription of DNA into RNA using the four ribonucleoside triphosphates as substrates. This Francisella tularensis subsp. tularensis (strain FSC 198) protein is DNA-directed RNA polymerase subunit alpha 1.